Reading from the N-terminus, the 154-residue chain is Myoglobin (154 aa).

The region spanning 2–148 (GLSDGEWTLV…FRNDMAAQYK (147 aa)) is the Globin domain. Residue Ser-4 is modified to Phosphoserine. Position 65 (His-65) interacts with nitrite. Residue His-65 participates in O2 binding. A Phosphothreonine modification is found at Thr-68. His-94 provides a ligand contact to heme b.

This sequence belongs to the globin family. As to quaternary structure, monomeric.

It localises to the cytoplasm. Its subcellular location is the sarcoplasm. It carries out the reaction Fe(III)-heme b-[protein] + nitric oxide + H2O = Fe(II)-heme b-[protein] + nitrite + 2 H(+). The catalysed reaction is H2O2 + AH2 = A + 2 H2O. Its function is as follows. Monomeric heme protein which primary function is to store oxygen and facilitate its diffusion within muscle tissues. Reversibly binds oxygen through a pentacoordinated heme iron and enables its timely and efficient release as needed during periods of heightened demand. Depending on the oxidative conditions of tissues and cells, and in addition to its ability to bind oxygen, it also has a nitrite reductase activity whereby it regulates the production of bioactive nitric oxide. Under stress conditions, like hypoxia and anoxia, it also protects cells against reactive oxygen species thanks to its pseudoperoxidase activity. The chain is Myoglobin from Capra hircus (Goat).